We begin with the raw amino-acid sequence, 53 residues long: MKLTCVLIAAVLLLAVCQLDSADAITRDCKTKGYACFASTECCVQDCWLVCLY.

The first 24 residues, 1-24 (MKLTCVLIAAVLLLAVCQLDSADA), serve as a signal peptide directing secretion. 3 cysteine pairs are disulfide-bonded: C29-C43, C36-C47, and C42-C51.

The protein belongs to the conotoxin O1 superfamily. As to expression, expressed by the venom duct.

The protein resides in the secreted. In terms of biological role, probable neurotoxin. The chain is Conotoxin Cal6.31 from Californiconus californicus (California cone).